The primary structure comprises 388 residues: DNA replication and repair protein RecF (388 aa).

Residue 30 to 37 participates in ATP binding; that stretch reads GANGNGKT.

It belongs to the RecF family.

Its subcellular location is the cytoplasm. In terms of biological role, the RecF protein is involved in DNA metabolism; it is required for DNA replication and normal SOS inducibility. RecF binds preferentially to single-stranded, linear DNA. It also seems to bind ATP. This chain is DNA replication and repair protein RecF, found in Nocardia farcinica (strain IFM 10152).